The following is a 175-amino-acid chain: Acetyl-CoA decarbonylase/synthase complex subunit epsilon 2 (175 aa).

Belongs to the CdhB family. In terms of assembly, heterotetramer of two alpha and two epsilon subunits. The ACDS complex is made up of alpha, epsilon, beta, gamma and delta subunits with a probable stoichiometry of (alpha(2)epsilon(2))(4)-beta(8)-(gamma(1)delta(1))(8).

Its function is as follows. Part of a complex that catalyzes the reversible cleavage of acetyl-CoA, allowing autotrophic growth from CO(2). The alpha-epsilon subcomponent functions as a carbon monoxide dehydrogenase. The precise role of the epsilon subunit is unclear; it may have a stabilizing role within the alpha(2)epsilon(2) component and/or be involved in electron transfer to FAD during a potential FAD-mediated CO oxidation. This chain is Acetyl-CoA decarbonylase/synthase complex subunit epsilon 2 (cdhB2), found in Archaeoglobus fulgidus (strain ATCC 49558 / DSM 4304 / JCM 9628 / NBRC 100126 / VC-16).